A 359-amino-acid polypeptide reads, in one-letter code: MTKKKVVIGMSGGVDSSVAAYLLKEQGYDVIGVTMQIWQEDKEYEEREGGCCSLSAVDDARRVAQKLDIPFYVLNFRDSFKRNVIDYFVDEYIQGRTPNPCIACNKYLKFDELLQKAKGIGADYVATGHYAKIEERDGRFQLIRSKDDRKDQTYALYNLTQEQLEHTLMPCGEFTKDKIREIAKEIGLDVHNKKDSEEICFIPDNNHGRYICEAAPNKVRPGNFVDKYGNVLGKHKGIVYYTIGQRKGLGLALGRPVFVTDINPVTNTVVVGPEEDIFKTDLVCKDINFISIDKLEGPMEVEAKIRYSARPAKATISPMENGRVKVSFEDKQRAITKGQSVVFYKDDLVVGGGIIESLL.

ATP contacts are provided by residues 9-16 and M35; that span reads GMSGGVDS. C104 functions as the Nucleophile in the catalytic mechanism. A disulfide bridge connects residues C104 and C200. G128 lines the ATP pocket. The interaction with tRNA stretch occupies residues 150–152; that stretch reads KDQ. The Cysteine persulfide intermediate role is filled by C200. Positions 306–307 are interaction with tRNA; sequence RY.

Belongs to the MnmA/TRMU family.

The protein resides in the cytoplasm. It catalyses the reaction S-sulfanyl-L-cysteinyl-[protein] + uridine(34) in tRNA + AH2 + ATP = 2-thiouridine(34) in tRNA + L-cysteinyl-[protein] + A + AMP + diphosphate + H(+). In terms of biological role, catalyzes the 2-thiolation of uridine at the wobble position (U34) of tRNA, leading to the formation of s(2)U34. The chain is tRNA-specific 2-thiouridylase MnmA from Clostridium perfringens (strain ATCC 13124 / DSM 756 / JCM 1290 / NCIMB 6125 / NCTC 8237 / Type A).